Reading from the N-terminus, the 602-residue chain is Threonine--tRNA ligase (602 aa).

The interval 208 to 499 (DHRKLGTELK…LTEHCAGEFP (292 aa)) is catalytic. 3 residues coordinate Zn(2+): Cys300, His351, and His476.

This sequence belongs to the class-II aminoacyl-tRNA synthetase family. As to quaternary structure, homodimer. Zn(2+) is required as a cofactor.

The protein resides in the cytoplasm. The enzyme catalyses tRNA(Thr) + L-threonine + ATP = L-threonyl-tRNA(Thr) + AMP + diphosphate + H(+). Functionally, catalyzes the attachment of threonine to tRNA(Thr) in a two-step reaction: L-threonine is first activated by ATP to form Thr-AMP and then transferred to the acceptor end of tRNA(Thr). Also edits incorrectly charged L-seryl-tRNA(Thr). The sequence is that of Threonine--tRNA ligase from Campylobacter jejuni subsp. jejuni serotype O:2 (strain ATCC 700819 / NCTC 11168).